The primary structure comprises 458 residues: Secretion-regulating guanine nucleotide exchange factor (458 aa).

RCC1 repeat units follow at residues Ala15–Gly67, Gly68–Asn119, Gly120–Ser171, Gly172–Ala230, Gly231–Thr283, Gly284–Gly351, and Val352–Leu402. Positions Asp420–Leu458 are disordered. Residues Glu426–Ser442 are compositionally biased toward basic and acidic residues. A Phosphoserine modification is found at Ser427.

Interacts with SEC5. The interaction occurs only in the presence of magnesium or manganese and is stimulated by dCTP or GTP.

It localises to the cytoplasm. Its subcellular location is the nucleus. Functionally, probable guanine nucleotide exchange factor (GEF), which may be involved in the secretion process. In Homo sapiens (Human), this protein is Secretion-regulating guanine nucleotide exchange factor (SERGEF).